Here is a 226-residue protein sequence, read N- to C-terminus: Small ribosomal subunit protein uS5 (226 aa).

The disordered stretch occupies residues 1–71; the sequence is MEDIKHNKKP…RKNEKRTKSE (71 aa). The span at 24 to 54 shows a compositional bias: low complexity; sequence ANPQANHANPNNRSASVNNNSVNNNKKNSSR. An S5 DRBM domain is found at 72–135; that stretch reads FEEKIVKISR…KMAENNVQKI (64 aa).

The protein belongs to the universal ribosomal protein uS5 family. As to quaternary structure, part of the 30S ribosomal subunit. Contacts proteins S4 and S8.

Functionally, with S4 and S12 plays an important role in translational accuracy. Its function is as follows. Located at the back of the 30S subunit body where it stabilizes the conformation of the head with respect to the body. The chain is Small ribosomal subunit protein uS5 from Mycoplasmoides gallisepticum (strain R(low / passage 15 / clone 2)) (Mycoplasma gallisepticum).